The primary structure comprises 146 residues: Hemoglobin subunit beta (146 aa).

The Globin domain maps to 2–146 (FLTAEEKSLV…VANALAHKYH (145 aa)). S44 carries the post-translational modification Phosphoserine. K59 carries the N6-acetyllysine modification. H63 is a heme b binding site. Position 82 is an N6-acetyllysine (K82). H92 lines the heme b pocket. C93 bears the S-nitrosocysteine mark. N6-acetyllysine is present on K144.

This sequence belongs to the globin family. In terms of assembly, heterotetramer of two alpha chains and two beta chains. As to expression, red blood cells.

Involved in oxygen transport from the lung to the various peripheral tissues. The protein is Hemoglobin subunit beta (HBB) of Proteles cristata (Aardwolf).